A 364-amino-acid polypeptide reads, in one-letter code: Trans-enoyl reductase ccsC (364 aa).

52-55 (CDYK) provides a ligand contact to NADP(+). Position 141 to 148 (141 to 148 (TGLATLGM)) interacts with substrate. NADP(+) is bound by residues 176–179 (SSSV), 199–202 (SPRN), Y217, and 264–265 (LE). 284–288 (GPALL) contacts substrate. 353 to 354 (VS) contributes to the NADP(+) binding site.

It belongs to the zinc-containing alcohol dehydrogenase family. In terms of assembly, monomer.

The protein operates within mycotoxin biosynthesis. Trans-enoyl reductase; part of the gene cluster that mediates the biosynthesis of a family of the mycotoxins cytochalasins E and K. The hybrid PKS-NRPS synthetase ccsA and the enoyl reductase ccsC are responsible for fusion of phenylalanine with an octaketide backbone and subsequent release of the stable tetramic acid precursor. The polyketide synthase module (PKS) of the PKS-NRPS ccsA is responsible for the synthesis of the octaketide backbone. The downstream nonribosomal peptide synthetase (NRPS) amidates the carboxyl end of the octaketide with a phenylalanine. A reductase-like domain (R) at the C-terminus catalyzes the reductive release of the polyketide-amino acid intermediate. Because ccsA lacks a designated enoylreductase (ER) domain, the required activity is provided the enoyl reductase ccsC. Upon formation of the 11-membered carbocycle-fused perhydroisoindolone intermediate, a number of oxidative steps are required to afford the final cytochalasin E and K, including two hydroxylations at C17 and C18, one alcohol oxidation at C17, one epoxidation at C6 and C7 and two Baeyer-Villiger oxidations. The oxidative modification at C17, C18 and the C6-C7 epoxidation are likely to be catalyzed by the two cytochrome P450 oxygenases ccsD and ccsG. CcsD may be responsible for the epoxidation of the C6-C7 double bond. CcsG may be responsible for the successive oxidative modifications at C17 and C18. The double Baeyer-Villiger oxidations of ketocytochalasin to precytochalasin and cytochalasin Z(16) are among the final steps leading to cytochalasin E and K and are catalyzed by ccsB. The first oxygen insertion step follows that of the classic BVMO mechanism, generating the ester precytochalasin. Release of precytochalasin into an aqueous environment can generate the shunt product iso-precytochalasin through spontaneous isomerization. Alternatively, precytochalasin can undergo further oxidation by ccsB to yield the in-line carbonate-containing cytochalasin Z(16). Cytochalasin Z(16) is a precursor to cytochalasin E and cytochalasin K, whereas iso-precytochalasin is a precursor to cytochalasin Z(17) and rosellichalasin. The hydrolyase ccsE may catalyze hydrolysis of epoxide bond in cytochalasin E to afford cytochalasin K. The function of ccsF has not been assigned but it may play a role in post-PKS-NRPS biosynthetic step, resistance or transport of cytochalasins and related PKS-NRPS products. This chain is Trans-enoyl reductase ccsC, found in Aspergillus clavatus (strain ATCC 1007 / CBS 513.65 / DSM 816 / NCTC 3887 / NRRL 1 / QM 1276 / 107).